Here is a 258-residue protein sequence, read N- to C-terminus: Isoprenyl transferase 2 (258 aa).

Residue aspartate 35 is part of the active site. A Mg(2+)-binding site is contributed by aspartate 35. Substrate-binding positions include 36-39 (GNRR), tryptophan 40, arginine 50, and 81-83 (SDD). Asparagine 84 functions as the Proton acceptor in the catalytic mechanism. Residues arginine 87, arginine 207, and 213-215 (RLS) contribute to the substrate site. Glutamate 226 is a Mg(2+) binding site.

It belongs to the UPP synthase family. As to quaternary structure, homodimer. Requires Mg(2+) as cofactor.

In terms of biological role, catalyzes the condensation of isopentenyl diphosphate (IPP) with allylic pyrophosphates generating different type of terpenoids. This is Isoprenyl transferase 2 from Streptomyces coelicolor (strain ATCC BAA-471 / A3(2) / M145).